Here is a 432-residue protein sequence, read N- to C-terminus: Serine hydroxymethyltransferase (432 aa).

Residues leucine 131 and 135–137 (GHL) contribute to the (6S)-5,6,7,8-tetrahydrofolate site. Position 240 is an N6-(pyridoxal phosphate)lysine (lysine 240).

The protein belongs to the SHMT family. In terms of assembly, homodimer. The cofactor is pyridoxal 5'-phosphate.

It localises to the cytoplasm. It catalyses the reaction (6R)-5,10-methylene-5,6,7,8-tetrahydrofolate + glycine + H2O = (6S)-5,6,7,8-tetrahydrofolate + L-serine. The protein operates within one-carbon metabolism; tetrahydrofolate interconversion. It participates in amino-acid biosynthesis; glycine biosynthesis; glycine from L-serine: step 1/1. In terms of biological role, catalyzes the reversible interconversion of serine and glycine with tetrahydrofolate (THF) serving as the one-carbon carrier. This reaction serves as the major source of one-carbon groups required for the biosynthesis of purines, thymidylate, methionine, and other important biomolecules. Also exhibits THF-independent aldolase activity toward beta-hydroxyamino acids, producing glycine and aldehydes, via a retro-aldol mechanism. The chain is Serine hydroxymethyltransferase from Acidiphilium cryptum (strain JF-5).